The following is a 199-amino-acid chain: Cytosine-containing mismatch-binding protein 1 (199 aa).

The segment at residues 123-197 is a DNA-binding region (HMG box); it reads PKKPSSAFIL…QYDKFMKEAG (75 aa).

As to quaternary structure, monomer.

The protein resides in the nucleus. Its function is as follows. Binds to cytosines in base mismatches and opposite chemically altered guanines. May be involved in repair of DNA damage. The polypeptide is Cytosine-containing mismatch-binding protein 1 (Schizosaccharomyces pombe (strain 972 / ATCC 24843) (Fission yeast)).